The sequence spans 274 residues: Mitochondrial outer membrane protein porin 4 (274 aa).

Position 2 is an N-acetylglycine (glycine 2). Serine 76 is modified (phosphoserine).

Belongs to the eukaryotic mitochondrial porin (TC 1.B.8.1) family. Widely expressed.

The protein localises to the cell membrane. It localises to the mitochondrion outer membrane. Its function is as follows. Forms a channel through the mitochondrial outer membrane that allows diffusion of small hydrophilic molecules. The channel adopts an open conformation at low or zero membrane potential and a closed conformation at potentials above 30-40 mV. The open state has a weak anion selectivity whereas the closed state is cation-selective. Involved in plant growth and development at the vegetative and reproductive stages. Is important for leaf and pollen development and mitochondrial membrane potential steady state. May be involved in disease resistance. The sequence is that of Mitochondrial outer membrane protein porin 4 (VDAC4) from Arabidopsis thaliana (Mouse-ear cress).